Consider the following 487-residue polypeptide: Probable glycine dehydrogenase (decarboxylating) subunit 2 (487 aa).

Lys-273 is subject to N6-(pyridoxal phosphate)lysine.

It belongs to the GcvP family. C-terminal subunit subfamily. The glycine cleavage system is composed of four proteins: P, T, L and H. In this organism, the P 'protein' is a heterodimer of two subunits. The cofactor is pyridoxal 5'-phosphate.

It carries out the reaction N(6)-[(R)-lipoyl]-L-lysyl-[glycine-cleavage complex H protein] + glycine + H(+) = N(6)-[(R)-S(8)-aminomethyldihydrolipoyl]-L-lysyl-[glycine-cleavage complex H protein] + CO2. Functionally, the glycine cleavage system catalyzes the degradation of glycine. The P protein binds the alpha-amino group of glycine through its pyridoxal phosphate cofactor; CO(2) is released and the remaining methylamine moiety is then transferred to the lipoamide cofactor of the H protein. The polypeptide is Probable glycine dehydrogenase (decarboxylating) subunit 2 (Lysinibacillus sphaericus (strain C3-41)).